A 307-amino-acid polypeptide reads, in one-letter code: MPEGKTDMERIGLFSEMGYTSIGDKYAAPGSKPFNESASKNRQMLPGGSKSMANMLGGYFDGQFKRVFEGESYSDPFKQRRQHRMQQSKKNLGKPFLPSSGEKKRSGLGSFYGTLGGPVVAFSAELKSRKAYTAPGKNFYTNPPKDGSGYGYPSVTIGKPYPYSSENYDISRELIKKEIEHHKSKLKGGAFKLNLHPKDYFEPNPYYTDKTLPPLKVHSQKKETEKPFKPSSPAKEAGGMKAGTFDPYPTHSNDPYTAKPSKTPVKERKVFHPPGGPKTYPVHSILTSNVIKSVTALNYKTVNLASY.

Disordered stretches follow at residues 73–102 and 218–279; these read YSDPFKQRRQHRMQQSKKNLGKPFLPSSGE and HSQK…GPKT.

The protein belongs to the CFAP96 family.

The protein resides in the cytoplasm. The protein localises to the cytoskeleton. It is found in the microtubule organizing center. Its subcellular location is the centrosome. This chain is Cilia-and flagella-associated protein 96 (cfap96.L), found in Xenopus laevis (African clawed frog).